The following is a 256-amino-acid chain: L-rhamnose 1-dehydrogenase (NAD(P)(+)) (256 aa).

8 residues coordinate NADP(+): Gly12, Ser14, Arg15, Ile17, Ser37, Asp66, Ala67, and Asn93. Ser146 functions as the Proton donor in the catalytic mechanism. Residues Ser146, Ser148, Gln156, and Tyr159 each contribute to the beta-L-rhamnose site. Residues Tyr159 and Lys163 each contribute to the NADP(+) site. Catalysis depends on Tyr159, which acts as the Proton acceptor. Residue Lys163 is the Lowers pKa of active site Tyr of the active site. A beta-L-rhamnose-binding site is contributed by Thr191. Ile192 contributes to the NADP(+) binding site. Asn197 serves as a coordination point for beta-L-rhamnose.

The protein belongs to the short-chain dehydrogenases/reductases (SDR) family.

The enzyme catalyses L-rhamnofuranose + NAD(+) = L-rhamnono-1,4-lactone + NADH + H(+). It catalyses the reaction L-rhamnofuranose + NADP(+) = L-rhamnono-1,4-lactone + NADPH + H(+). The protein operates within carbohydrate degradation; L-rhamnose degradation. Its function is as follows. NAD(P)-dependent dehydrogenase that catalyzes the oxidation of L-rhamnose to L-rhamnono-1,4-lactone. Also shows high activity with L-lyxose and low activity with L-mannose and L-fucose. Can utilize either NAD(+) or NADP(+), with a strong preference for NADP(+). Catalyzes the first step in an alternative pathway for rhamnose utilization that does not involve phosphorylated intermediates. The protein is L-rhamnose 1-dehydrogenase (NAD(P)(+)) of Azotobacter vinelandii (strain DJ / ATCC BAA-1303).